An 81-amino-acid polypeptide reads, in one-letter code: WAP four-disulfide core domain protein 13 (81 aa).

The first 22 residues, 1-22 (MRPVSPLQLLLVLSLAPQPVLG), serve as a signal peptide directing secretion. Residues 31 to 74 (YILEPPPCRSEPGACNMFCTQQEECPEPLQCCSAYCGIVCTSNQ) form the WAP domain. 4 cysteine pairs are disulfide-bonded: cysteine 38–cysteine 62, cysteine 45–cysteine 66, cysteine 49–cysteine 61, and cysteine 55–cysteine 70.

It localises to the secreted. Putative acid-stable proteinase inhibitor. The sequence is that of WAP four-disulfide core domain protein 13 (Wfdc13) from Mus musculus (Mouse).